Here is a 104-residue protein sequence, read N- to C-terminus: uncharacterized protein (104 aa).

Disordered stretches follow at residues 1-48 (MLRR…NNQP) and 66-104 (QENTSSNNNNNNNHGDDENGSRYGHGSSLGGDVHSRRCS).

This is an uncharacterized protein from Saccharomyces cerevisiae (strain ATCC 204508 / S288c) (Baker's yeast).